The chain runs to 483 residues: Inositol-pentakisphosphate 2-kinase (483 aa).

The short motif at 140-144 (EIKPK) is the EXKPK motif element. A disordered region spans residues 279–298 (SNRSGEPRKMHLSESKPHCE). Residues 281-297 (RSGEPRKMHLSESKPHC) are compositionally biased toward basic and acidic residues.

Belongs to the IPK1 type 2 family. Expressed both maternally and zygotically. Expressed in cleavage-stage embryos. Ubiquitously distributed throughout blastula stages of embryogenesis. At the onset of gastrulation, it is enriched in cells around the blastoderm margin. At shield stage, expression is detected in the deep involuted cells that contribute to mesendoderm. During mid and late gastrula stages, it is strongly expressed in axial mesendoderm. However, it is not present in the nascent tailbud at yolk plug closure (YPC) stage. Expression in axial mesendoderm is reduced at the 2 somite stage (SS). At 6 SS, it is expressed in cells surrounding Kupffer's vesicle, but apparently not within. By 10 SS, it is no longer detected as a specific signal above background.

It localises to the cytoplasm. The protein localises to the nucleus. It carries out the reaction 1D-myo-inositol 1,3,4,5,6-pentakisphosphate + ATP = 1D-myo-inositol hexakisphosphate + ADP + H(+). In terms of biological role, phosphorylates Ins(1,3,4,5,6)P5 at position 2 to form Ins(1,2,3,4,5,6)P6 (InsP6 or phytate). InsP6 is involved in many processes such as mRNA export, non-homologous end-joining, endocytosis and ion channel regulation. InsP6 also acts as a key regulator of left-right asymmetry in embryo, probably by regulating asymmetric Ca(2+) during left-right specification. In Danio rerio (Zebrafish), this protein is Inositol-pentakisphosphate 2-kinase (ippk).